A 122-amino-acid polypeptide reads, in one-letter code: Large ribosomal subunit protein bL17 (122 aa).

It belongs to the bacterial ribosomal protein bL17 family. As to quaternary structure, part of the 50S ribosomal subunit. Contacts protein L32.

The protein is Large ribosomal subunit protein bL17 of Staphylococcus epidermidis (strain ATCC 35984 / DSM 28319 / BCRC 17069 / CCUG 31568 / BM 3577 / RP62A).